An 89-amino-acid polypeptide reads, in one-letter code: Large ribosomal subunit protein bL27 (89 aa).

Residues 1–21 form a disordered region; sequence MAHKKAGGSSRNGRDSAGRRL.

Belongs to the bacterial ribosomal protein bL27 family.

The chain is Large ribosomal subunit protein bL27 from Erythrobacter litoralis (strain HTCC2594).